A 426-amino-acid chain; its full sequence is Serine--tRNA ligase (426 aa).

An L-serine-binding site is contributed by 233 to 235 (TAE). Position 264 to 266 (264 to 266 (RRE)) interacts with ATP. Glutamate 287 contacts L-serine. 351–354 (EISS) is a binding site for ATP. An L-serine-binding site is contributed by serine 386.

Belongs to the class-II aminoacyl-tRNA synthetase family. Type-1 seryl-tRNA synthetase subfamily. As to quaternary structure, homodimer. The tRNA molecule binds across the dimer.

It is found in the cytoplasm. It carries out the reaction tRNA(Ser) + L-serine + ATP = L-seryl-tRNA(Ser) + AMP + diphosphate + H(+). The enzyme catalyses tRNA(Sec) + L-serine + ATP = L-seryl-tRNA(Sec) + AMP + diphosphate + H(+). The protein operates within aminoacyl-tRNA biosynthesis; selenocysteinyl-tRNA(Sec) biosynthesis; L-seryl-tRNA(Sec) from L-serine and tRNA(Sec): step 1/1. Catalyzes the attachment of serine to tRNA(Ser). Is also able to aminoacylate tRNA(Sec) with serine, to form the misacylated tRNA L-seryl-tRNA(Sec), which will be further converted into selenocysteinyl-tRNA(Sec). The protein is Serine--tRNA ligase of Thermosipho africanus (strain TCF52B).